The primary structure comprises 250 residues: Non-specific acid phosphatase (250 aa).

A signal peptide spans 1 to 20 (MKSRYLVFFLPLIVAKYTSA).

The protein belongs to the class A bacterial acid phosphatase family. As to quaternary structure, homodimer.

The protein resides in the periplasm. It catalyses the reaction a phosphate monoester + H2O = an alcohol + phosphate. This Salmonella typhimurium (strain LT2 / SGSC1412 / ATCC 700720) protein is Non-specific acid phosphatase (phoN).